Reading from the N-terminus, the 417-residue chain is Calreticulin (417 aa).

Residues methionine 1–alanine 17 form the signal peptide. The N-domain stretch occupies residues aspartate 18–glutamate 197. Glutamine 26 lines the Ca(2+) pocket. Residue lysine 48 is modified to N6-acetyllysine. Residues lysine 62 and lysine 64 each contribute to the Ca(2+) site. Lysine 64 is modified (N6-(2-hydroxyisobutyryl)lysine). Residues tyrosine 109, lysine 111, tyrosine 128, and aspartate 135 each contribute to the an alpha-D-glucoside site. A disulfide bridge links cysteine 137 with cysteine 163. At lysine 159 the chain carries N6-acetyllysine. Residue asparagine 179 is glycosylated (N-linked (GlcNAc...) asparagine). Residues valine 191–phenylalanine 202 form a 1-1 repeat. The interval valine 191–glutamate 255 is 4 X approximate repeats. The tract at residues serine 193–glutamate 270 is disordered. Residues aspartate 198 to tyrosine 308 form a P-domain region. A compositionally biased stretch (basic and acidic residues) spans lysine 207 to glutamate 251. At lysine 209 the chain carries N6-acetyllysine. 6 tandem repeats follow at residues aspartate 210–aspartate 221, aspartate 227–lysine 238, aspartate 244–glutamate 255, glycine 259–proline 269, glycine 273–proline 283, and glycine 287–proline 297. An interaction with PPIB region spans residues aspartate 237 to glutamate 270. A compositionally biased stretch (acidic residues) spans aspartate 252–tryptophan 261. Positions glycine 259–proline 297 are 3 X approximate repeats. Residues glutamate 309–leucine 417 are C-domain. Aspartate 317 provides a ligand contact to an alpha-D-glucoside. Aspartate 328 serves as a coordination point for Ca(2+). The tract at residues threonine 350 to leucine 417 is disordered. Over residues alanine 352–glutamate 378 the composition is skewed to basic and acidic residues. Over residues glutamate 379 to alanine 408 the composition is skewed to acidic residues. A Prevents secretion from ER motif is present at residues lysine 414–leucine 417.

It belongs to the calreticulin family. As to quaternary structure, monomer. Component of an EIF2 complex at least composed of CELF1/CUGBP1, CALR, CALR3, EIF2S1, EIF2S2, HSP90B1 and HSPA5. Interacts with PDIA3/ERp57 and SPACA9. Interacts with TRIM21. Interacts with NR3C1. Interacts with PPIB. Interacts (via P-domain) with PDIA5. Interacts with GABARAP. Interacts with CLCC1.

It is found in the endoplasmic reticulum lumen. The protein localises to the cytoplasm. The protein resides in the cytosol. Its subcellular location is the secreted. It localises to the extracellular space. It is found in the extracellular matrix. The protein localises to the cell surface. The protein resides in the sarcoplasmic reticulum lumen. Its subcellular location is the cytoplasmic vesicle. It localises to the secretory vesicle. It is found in the cortical granule. The protein localises to the cytolytic granule. Its function is as follows. Calcium-binding chaperone that promotes folding, oligomeric assembly and quality control in the endoplasmic reticulum (ER) via the calreticulin/calnexin cycle. This lectin interacts transiently with almost all of the monoglucosylated glycoproteins that are synthesized in the ER. Interacts with the DNA-binding domain of NR3C1 and mediates its nuclear export. Involved in maternal gene expression regulation. May participate in oocyte maturation via the regulation of calcium homeostasis. Present in the cortical granules of non-activated oocytes, is exocytosed during the cortical reaction in response to oocyte activation and might participate in the block to polyspermy. This is Calreticulin (CALR) from Bos taurus (Bovine).